The following is a 359-amino-acid chain: tRNA N6-adenosine threonylcarbamoyltransferase (359 aa).

Fe cation is bound by residues His115 and His119. Residues 137–141 (LVSGG), Asp170, Gly183, and Asn283 each bind substrate. Asp311 is a Fe cation binding site. The tract at residues 328-359 (APDSLDIAPRSRWPLDEKSAPVFGTGRRGAKA) is disordered.

It belongs to the KAE1 / TsaD family. Fe(2+) is required as a cofactor.

It localises to the cytoplasm. It catalyses the reaction L-threonylcarbamoyladenylate + adenosine(37) in tRNA = N(6)-L-threonylcarbamoyladenosine(37) in tRNA + AMP + H(+). Functionally, required for the formation of a threonylcarbamoyl group on adenosine at position 37 (t(6)A37) in tRNAs that read codons beginning with adenine. Is involved in the transfer of the threonylcarbamoyl moiety of threonylcarbamoyl-AMP (TC-AMP) to the N6 group of A37, together with TsaE and TsaB. TsaD likely plays a direct catalytic role in this reaction. The sequence is that of tRNA N6-adenosine threonylcarbamoyltransferase from Brucella melitensis biotype 2 (strain ATCC 23457).